We begin with the raw amino-acid sequence, 383 residues long: Probable cell wall hydrolase LytN (383 aa).

Residues 1–49 (MFVYYCKECFIMNKQQSKVRYSIRKVSIGILSISIGMFLALGMSNKAYA) form the signal peptide. Residues 175–219 (QIYTVKKGDTLSAIALKYKTTVSNIQNTNNIANPNLIFIGQKLKV) enclose the LysM domain. A Peptidase C51 domain is found at 241-378 (NSSTLNYLKT…NYENDMIFIR (138 aa)).

The protein localises to the secreted. Its function is as follows. Probably involved in peptidoglycan hydrolysis. This is Probable cell wall hydrolase LytN (lytN) from Staphylococcus aureus (strain MSSA476).